The sequence spans 233 residues: Phosphoglycolate phosphatase 2 (233 aa).

Aspartate 13 serves as the catalytic Nucleophile. Residues aspartate 13 and aspartate 15 each contribute to the Mg(2+) site. Lysine 152 provides a ligand contact to substrate. Positions 174 and 178 each coordinate Mg(2+).

Belongs to the archaeal SPP-like hydrolase family. Mg(2+) is required as a cofactor.

It carries out the reaction 2-phosphoglycolate + H2O = glycolate + phosphate. Catalyzes the dephosphorylation of 2-phosphoglycolate. The sequence is that of Phosphoglycolate phosphatase 2 from Saccharolobus solfataricus (strain ATCC 35092 / DSM 1617 / JCM 11322 / P2) (Sulfolobus solfataricus).